The primary structure comprises 671 residues: Tail sheath protein (671 aa).

The protein belongs to the myoviridae tail sheath protein family. Homomultimer.

Its subcellular location is the virion. The protein resides in the host cytoplasm. In terms of biological role, polymerizes as an extended structure around the baseplate-tail tube complex. During ejection, the sheath shifts to a contracted form, thereby making the inner tail tube protrude through the host cell envelope. The protein is Tail sheath protein of Vibrio phage KVP40 (isolate Vibrio parahaemolyticus/Japan/Matsuzaki/1991) (KVP40).